Consider the following 259-residue polypeptide: Diphthine synthase (259 aa).

S-adenosyl-L-methionine contacts are provided by residues Leu9, Asp85, Val88, 113–114 (TA), Leu168, Ala209, and His234.

This sequence belongs to the diphthine synthase family. In terms of assembly, homodimer.

It carries out the reaction 2-[(3S)-amino-3-carboxypropyl]-L-histidyl-[translation elongation factor 2] + 3 S-adenosyl-L-methionine = diphthine-[translation elongation factor 2] + 3 S-adenosyl-L-homocysteine + 3 H(+). Its pathway is protein modification; peptidyl-diphthamide biosynthesis. In terms of biological role, S-adenosyl-L-methionine-dependent methyltransferase that catalyzes the trimethylation of the amino group of the modified target histidine residue in translation elongation factor 2 (EF-2), to form an intermediate called diphthine. The three successive methylation reactions represent the second step of diphthamide biosynthesis. This chain is Diphthine synthase, found in Haloarcula marismortui (strain ATCC 43049 / DSM 3752 / JCM 8966 / VKM B-1809) (Halobacterium marismortui).